The following is a 653-amino-acid chain: Fusexin 1 (653 aa).

The N-terminal stretch at 1-24 (MKRVGNCWKASVAAFFLLMFTAFA) is a signal peptide. The Extracellular segment spans residues 25-559 (AADTTSVDTV…FENIWSGDAN (535 aa)). Disulfide bonds link Cys-129–Cys-167, Cys-398–Cys-441, Cys-468–Cys-487, and Cys-499–Cys-516. The fusion loop stretch occupies residues 155-160 (DYWTGS). The helical transmembrane segment at 560-580 (ALNWLQVFVTFIAFLGGFALV) threads the bilayer. The Cytoplasmic portion of the chain corresponds to 581–604 (GVKLGKIVDGLATEFIPVKDSHVR). The next 2 helical transmembrane spans lie at 605–625 (LVIG…LVTD) and 626–646 (PLGL…YLSA). Over 647–653 (SAPEINL) the chain is Cytoplasmic.

This sequence belongs to the HAP2/GCS1 family. Fusexin 1 subfamily. Homotrimer stabilized by interdomain contacts and numerous Ca(2+) and Na(+) ions.

The protein resides in the cell surface. Its subcellular location is the cell membrane. Its function is as follows. Exhibits fusogenic activity. Mediates cell-cell fusion in mammalian cells (bilateral fusion). In Haloplanus natans (strain DSM 17983 / JCM 14081 / CGMCC 1.8972 / RE-101), this protein is Fusexin 1.